A 163-amino-acid polypeptide reads, in one-letter code: Pheromone-binding protein (163 aa).

A signal peptide spans 1 to 22 (MMSVRLMLVVAVWLCLRVDASQ). 3 cysteine pairs are disulfide-bonded: cysteine 39-cysteine 74, cysteine 70-cysteine 129, and cysteine 117-cysteine 138.

The protein belongs to the PBP/GOBP family. Antenna.

Its function is as follows. This major soluble protein in olfactory sensilla of male moths might serve to solubilize the extremely hydrophobic pheromone molecules and to transport pheromone through the aqueous lymph to receptors located on olfactory cilia. The protein is Pheromone-binding protein of Heliothis virescens (Tobacco budworm moth).